The chain runs to 57 residues: UPF0391 membrane protein RB0084 (57 aa).

A run of 2 helical transmembrane segments spans residues 4–24 (WALI…SGVS) and 33–53 (ILFY…LAVG).

The protein belongs to the UPF0391 family.

It localises to the cell membrane. This Rhizobium meliloti (strain 1021) (Ensifer meliloti) protein is UPF0391 membrane protein RB0084.